A 123-amino-acid polypeptide reads, in one-letter code: Transmembrane protein 049L (123 aa).

2 helical membrane passes run 67–87 (VFGALCVAFGIMLIGFLLWLV) and 104–121 (LSLQQMVFLITTCIGVYN).

It localises to the membrane. This is Transmembrane protein 049L from Acheta domesticus (House cricket).